A 475-amino-acid chain; its full sequence is Ribulose bisphosphate carboxylase large chain (475 aa).

The propeptide occupies 1–2 (MS). Residue Pro-3 is modified to N-acetylproline. Lys-14 bears the N6,N6,N6-trimethyllysine mark. Substrate-binding residues include Asn-123 and Thr-173. The active-site Proton acceptor is the Lys-175. Lys-177 serves as a coordination point for substrate. Lys-201, Asp-203, and Glu-204 together coordinate Mg(2+). Lys-201 bears the N6-carboxylysine mark. His-294 functions as the Proton acceptor in the catalytic mechanism. Substrate is bound by residues Arg-295, His-327, and Ser-379.

This sequence belongs to the RuBisCO large chain family. Type I subfamily. Heterohexadecamer of 8 large chains and 8 small chains; disulfide-linked. The disulfide link is formed within the large subunit homodimers. It depends on Mg(2+) as a cofactor. In terms of processing, the disulfide bond which can form in the large chain dimeric partners within the hexadecamer appears to be associated with oxidative stress and protein turnover.

It localises to the plastid. Its subcellular location is the chloroplast. It catalyses the reaction 2 (2R)-3-phosphoglycerate + 2 H(+) = D-ribulose 1,5-bisphosphate + CO2 + H2O. The enzyme catalyses D-ribulose 1,5-bisphosphate + O2 = 2-phosphoglycolate + (2R)-3-phosphoglycerate + 2 H(+). Its function is as follows. RuBisCO catalyzes two reactions: the carboxylation of D-ribulose 1,5-bisphosphate, the primary event in carbon dioxide fixation, as well as the oxidative fragmentation of the pentose substrate in the photorespiration process. Both reactions occur simultaneously and in competition at the same active site. This chain is Ribulose bisphosphate carboxylase large chain, found in Pinus edulis (Pinyon pine).